Here is a 529-residue protein sequence, read N- to C-terminus: uncharacterized protein (529 aa).

The protein to M.jannaschii MJ1451.

This is an uncharacterized protein from Methanothermobacter thermautotrophicus (strain ATCC 29096 / DSM 1053 / JCM 10044 / NBRC 100330 / Delta H) (Methanobacterium thermoautotrophicum).